Here is a 396-residue protein sequence, read N- to C-terminus: Enoyl-[acyl-carrier-protein] reductase [NADH] (396 aa).

Residues 48-53 (GASTGY), 74-75 (FE), 111-112 (DA), and 139-140 (LA) contribute to the NAD(+) site. A substrate-binding site is contributed by Tyr-225. Tyr-235 serves as the catalytic Proton donor. Residues Lys-244 and 273 to 275 (VVT) contribute to the NAD(+) site.

Belongs to the TER reductase family. Monomer.

The catalysed reaction is a 2,3-saturated acyl-[ACP] + NAD(+) = a (2E)-enoyl-[ACP] + NADH + H(+). Its pathway is lipid metabolism; fatty acid biosynthesis. Involved in the final reduction of the elongation cycle of fatty acid synthesis (FAS II). Catalyzes the reduction of a carbon-carbon double bond in an enoyl moiety that is covalently linked to an acyl carrier protein (ACP). The sequence is that of Enoyl-[acyl-carrier-protein] reductase [NADH] from Teredinibacter turnerae (strain ATCC 39867 / T7901).